A 485-amino-acid polypeptide reads, in one-letter code: Glutamyl-tRNA(Gln) amidotransferase subunit A (485 aa).

Active-site charge relay system residues include Lys-74 and Ser-149. Ser-173 (acyl-ester intermediate) is an active-site residue.

This sequence belongs to the amidase family. GatA subfamily. Heterotrimer of A, B and C subunits.

The catalysed reaction is L-glutamyl-tRNA(Gln) + L-glutamine + ATP + H2O = L-glutaminyl-tRNA(Gln) + L-glutamate + ADP + phosphate + H(+). In terms of biological role, allows the formation of correctly charged Gln-tRNA(Gln) through the transamidation of misacylated Glu-tRNA(Gln) in organisms which lack glutaminyl-tRNA synthetase. The reaction takes place in the presence of glutamine and ATP through an activated gamma-phospho-Glu-tRNA(Gln). This is Glutamyl-tRNA(Gln) amidotransferase subunit A from Herminiimonas arsenicoxydans.